The primary structure comprises 263 residues: Cysteine-rich repeat secretory protein 55 (263 aa).

A signal peptide spans Met1–Ala20. 2 Gnk2-homologous domains span residues Asp22–Phe126 and Thr132–Phe240.

It belongs to the cysteine-rich repeat secretory protein family.

It localises to the secreted. In Arabidopsis thaliana (Mouse-ear cress), this protein is Cysteine-rich repeat secretory protein 55 (CRRSP55).